A 258-amino-acid polypeptide reads, in one-letter code: Spindlin-2A (258 aa).

The span at 1-23 (MKTPNAQEAEGQQTRAAAGRATG) shows a compositional bias: low complexity. Positions 1-49 (MKTPNAQEAEGQQTRAAAGRATGSANMTKKKVSQKKQRGRPSSQPRRNI) are disordered. The segment covering 28-39 (TKKKVSQKKQRG) has biased composition (basic residues). 3 tudor-like domain regions span residues 50-99 (VGCR…LELH), 129-178 (IGKA…YQLL), and 210-255 (IGKH…YDLV). 2 histone H3K4me3 and H3R8me2a binding regions span residues glutamate 138 and 246-248 (DFH).

It belongs to the SPIN/STSY family. Interacts with C11orf84/SPINDOC.

Its subcellular location is the nucleus. Functionally, may be involved in the regulation of cell cycle progression. Exhibits H3K4me3-binding activity. This is Spindlin-2A (SPIN2A) from Homo sapiens (Human).